A 114-amino-acid chain; its full sequence is Large ribosomal subunit protein uL22 (114 aa).

It belongs to the universal ribosomal protein uL22 family. As to quaternary structure, part of the 50S ribosomal subunit.

Functionally, this protein binds specifically to 23S rRNA; its binding is stimulated by other ribosomal proteins, e.g. L4, L17, and L20. It is important during the early stages of 50S assembly. It makes multiple contacts with different domains of the 23S rRNA in the assembled 50S subunit and ribosome. The globular domain of the protein is located near the polypeptide exit tunnel on the outside of the subunit, while an extended beta-hairpin is found that lines the wall of the exit tunnel in the center of the 70S ribosome. The protein is Large ribosomal subunit protein uL22 of Streptococcus suis (strain 98HAH33).